A 225-amino-acid polypeptide reads, in one-letter code: Ribonuclease 3 (225 aa).

The RNase III domain occupies 5-127 (LERLQRQIGY…IIGAISLDSD (123 aa)). Residue E40 participates in Mg(2+) binding. D44 is a catalytic residue. 2 residues coordinate Mg(2+): D113 and E116. The active site involves E116. The DRBM domain maps to 154-224 (DPKTRLQEYL…AEKILQLLEM (71 aa)).

Belongs to the ribonuclease III family. In terms of assembly, homodimer. Mg(2+) is required as a cofactor.

It localises to the cytoplasm. It catalyses the reaction Endonucleolytic cleavage to 5'-phosphomonoester.. Functionally, digests double-stranded RNA. Involved in the processing of primary rRNA transcript to yield the immediate precursors to the large and small rRNAs (23S and 16S). Also processes some mRNAs, and tRNAs when they are encoded in the rRNA operon. Its function is as follows. CRISPR (clustered regularly interspaced short palindromic repeat) is an adaptive immune system that provides protection against mobile genetic elements (viruses, transposable elements and conjugative plasmids). CRISPR clusters contain spacers, sequences complementary to antecedent mobile elements, and target invading nucleic acids. CRISPR clusters are transcribed and processed into CRISPR RNA (crRNA). In this organism endogenous ribonuclease 3 and Cas9 are required for correct coprocessing of pre-crRNA and the trans-encoded small RNA (tracrRNA). Cas9, crRNA and tracrRNA are required for cleavage of invading DNA. Complements pre-crRNA and tracrRNA coprocessing defects in an rnc deletion in S.pyogenes strain 370. The polypeptide is Ribonuclease 3 (Pasteurella multocida (strain Pm70)).